The following is a 279-amino-acid chain: Expansin-A22 (279 aa).

Positions 1-27 (MKLLEKMIYVEFLMIIMVIWVVPMSYG) are cleaved as a signal peptide. The Expansin-like EG45 domain occupies 76–186 (QGACGYGNLF…RRIPCSKTGG (111 aa)). In terms of domain architecture, Expansin-like CBD spans 196–275 (YFLMVLIYNV…NWGFGQTFDG (80 aa)).

It belongs to the expansin family. Expansin A subfamily.

It is found in the secreted. It localises to the cell wall. Its subcellular location is the membrane. In terms of biological role, causes loosening and extension of plant cell walls by disrupting non-covalent bonding between cellulose microfibrils and matrix glucans. No enzymatic activity has been found. The protein is Expansin-A22 (EXPA22) of Arabidopsis thaliana (Mouse-ear cress).